Reading from the N-terminus, the 214-residue chain is Outer-membrane lipoprotein LolB (214 aa).

The signal sequence occupies residues 1 to 25; it reads MNNLKRFTKSIFSCIALSGLLFLGG. The N-palmitoyl cysteine moiety is linked to residue cysteine 26. Residue cysteine 26 is the site of S-diacylglycerol cysteine attachment.

This sequence belongs to the LolB family. Monomer.

It localises to the cell outer membrane. Functionally, plays a critical role in the incorporation of lipoproteins in the outer membrane after they are released by the LolA protein. This chain is Outer-membrane lipoprotein LolB, found in Shewanella sp. (strain MR-4).